The sequence spans 93 residues: Defensin alpha 4 (93 aa).

The N-terminal stretch at 1 to 19 (MRTLTLLITLLLLALHTQA) is a signal peptide. Positions 20 to 62 (ESPQERAKAAPDQDMVMEDQDIFISFGGYKGTVLQDAVVKAGQ) are excised as a propeptide. 3 cysteine pairs are disulfide-bonded: Cys-64–Cys-92, Cys-66–Cys-81, and Cys-71–Cys-91.

It belongs to the alpha-defensin family. As to expression, expressed in neutrophils (at protein level). Highest expression in bone marrow and to a much lesser extent in small intestine.

It is found in the secreted. In terms of biological role, host-defense peptide that has antimicrobial activity against Gram-positive and Gram-negative bacteria and fungi (in vitro). Exhibits activity against E.coli, A.calcoaceticus, S,aureus and C.albicans. The polypeptide is Defensin alpha 4 (Rattus norvegicus (Rat)).